Consider the following 377-residue polypeptide: Succinyl-diaminopimelate desuccinylase (377 aa).

Histidine 68 lines the Zn(2+) pocket. Aspartate 70 is an active-site residue. Aspartate 101 contacts Zn(2+). Glutamate 135 serves as the catalytic Proton acceptor. The Zn(2+) site is built by glutamate 136, glutamate 164, and histidine 350.

It belongs to the peptidase M20A family. DapE subfamily. In terms of assembly, homodimer. Zn(2+) is required as a cofactor. It depends on Co(2+) as a cofactor.

The enzyme catalyses N-succinyl-(2S,6S)-2,6-diaminopimelate + H2O = (2S,6S)-2,6-diaminopimelate + succinate. The protein operates within amino-acid biosynthesis; L-lysine biosynthesis via DAP pathway; LL-2,6-diaminopimelate from (S)-tetrahydrodipicolinate (succinylase route): step 3/3. Functionally, catalyzes the hydrolysis of N-succinyl-L,L-diaminopimelic acid (SDAP), forming succinate and LL-2,6-diaminopimelate (DAP), an intermediate involved in the bacterial biosynthesis of lysine and meso-diaminopimelic acid, an essential component of bacterial cell walls. This Acinetobacter baumannii (strain AB307-0294) protein is Succinyl-diaminopimelate desuccinylase.